A 301-amino-acid polypeptide reads, in one-letter code: Recombination-associated protein RdgC (301 aa).

This sequence belongs to the RdgC family.

It localises to the cytoplasm. The protein resides in the nucleoid. Its function is as follows. May be involved in recombination. In Pseudoalteromonas atlantica (strain T6c / ATCC BAA-1087), this protein is Recombination-associated protein RdgC.